The following is a 289-amino-acid chain: Inorganic pyrophosphatase (289 aa).

Position 2 is an N-acetylserine (Ser2). The residue at position 57 (Lys57) is an N6-acetyllysine. Residues Asp116, Asp121, and Asp153 each coordinate Mg(2+). Lys228 bears the N6-acetyllysine mark. Residue Ser250 is modified to Phosphoserine.

This sequence belongs to the PPase family. As to quaternary structure, homodimer. Requires Mg(2+) as cofactor. In terms of tissue distribution, expressed ubiquitously.

The protein resides in the cytoplasm. The enzyme catalyses diphosphate + H2O = 2 phosphate + H(+). The protein is Inorganic pyrophosphatase (PPA1) of Homo sapiens (Human).